Consider the following 337-residue polypeptide: Probable cytosolic iron-sulfur protein assembly protein 1 (337 aa).

7 WD repeats span residues 11–50 (LHND…ENLL), 57–96 (VHKK…LEEG), 109–148 (GHEN…EEYE), 155–194 (EHSQ…WECA), 199–240 (GHEG…EDDQ), 252–290 (AHRS…SEVS), and 301–337 (AHTV…NYQD).

It belongs to the WD repeat CIA1 family. Interacts with NAR1.

Its subcellular location is the cytoplasm. The protein localises to the nucleus. In terms of biological role, essential component of the cytosolic iron-sulfur (Fe/S) protein assembly machinery. Required for the maturation of extramitochondrial Fe/S proteins. This is Probable cytosolic iron-sulfur protein assembly protein 1 from Candida glabrata (strain ATCC 2001 / BCRC 20586 / JCM 3761 / NBRC 0622 / NRRL Y-65 / CBS 138) (Yeast).